An 82-amino-acid polypeptide reads, in one-letter code: CLAVATA3/ESR (CLE)-related protein 53 (82 aa).

A signal peptide spans 1–26; the sequence is MATSTNSREFLIFICVLTLLVVRSEA. Hydroxyproline is present on residues Pro-74 and Pro-77. A glycan (O-linked (Ara...) hydroxyproline) is linked at Pro-77.

This sequence belongs to the CLV3/ESR signal peptide family. The O-glycosylation (arabinosylation) of the hydroxyproline Pro-77 enhances binding affinity of the CLE53p peptide for its receptor. In terms of tissue distribution, expressed in root vasculature.

Its subcellular location is the secreted. The protein localises to the extracellular space. Its function is as follows. Signaling peptide involved in the regulation of root colonization by arbuscular mycorrhizal (AM) fungi. Moves from root to shoot to function with the receptor kinase SUNN, in a signaling pathway that repress strigolactone biosynthetic genes and strigolactone content in the roots, and consequently reduces the promotion of further colonization by AM fungi. The polypeptide is CLAVATA3/ESR (CLE)-related protein 53 (Medicago truncatula (Barrel medic)).